The primary structure comprises 197 residues: Pyridoxal 5'-phosphate synthase subunit PdxT (197 aa).

An L-glutamine-binding site is contributed by 53-55 (GES). Cysteine 85 functions as the Nucleophile in the catalytic mechanism. Residues arginine 114 and 142–143 (IR) contribute to the L-glutamine site. Active-site charge relay system residues include histidine 179 and glutamate 181.

This sequence belongs to the glutaminase PdxT/SNO family. In the presence of PdxS, forms a dodecamer of heterodimers. Only shows activity in the heterodimer.

The enzyme catalyses aldehydo-D-ribose 5-phosphate + D-glyceraldehyde 3-phosphate + L-glutamine = pyridoxal 5'-phosphate + L-glutamate + phosphate + 3 H2O + H(+). The catalysed reaction is L-glutamine + H2O = L-glutamate + NH4(+). The protein operates within cofactor biosynthesis; pyridoxal 5'-phosphate biosynthesis. In terms of biological role, catalyzes the hydrolysis of glutamine to glutamate and ammonia as part of the biosynthesis of pyridoxal 5'-phosphate. The resulting ammonia molecule is channeled to the active site of PdxS. The chain is Pyridoxal 5'-phosphate synthase subunit PdxT from Thermococcus gammatolerans (strain DSM 15229 / JCM 11827 / EJ3).